The following is a 131-amino-acid chain: C-glycoside deglycosidase beta subunit (131 aa).

The protein belongs to the C-glycoside deglycosidase beta subunit family. In terms of assembly, heterodimer composed of an alpha subunit (CarB) and a beta subunit (CarC). Requires a divalent metal cation as cofactor.

The catalysed reaction is 3''-dehydroisovitexin = 1,5-anhydro-D-erythro-hex-1-en-3-ulose + apigenin. The enzyme catalyses 3''-dehydroisoorientin = 1,5-anhydro-D-erythro-hex-1-en-3-ulose + luteolin. Its function is as follows. Carbon-carbon bond-cleaving enzyme which participates in the metabolism of C-glycosides. Acts on the C6-glycosylated compounds 3''-dehydroisovitexin (3''-oxo-isovitexin) and 3''-dehydroisoorientin (3''-oxo-homoorientin). Shows weak activity with 3'-dehydromangiferin (3'-oxo-mangiferin). This Microbacterium trichothecenolyticum (Aureobacterium trichothecenolyticum) protein is C-glycoside deglycosidase beta subunit.